Reading from the N-terminus, the 429-residue chain is 3-phosphoshikimate 1-carboxyvinyltransferase (429 aa).

3-phosphoshikimate is bound by residues lysine 23, serine 24, and arginine 28. Lysine 23 lines the phosphoenolpyruvate pocket. Glycine 94 and arginine 126 together coordinate phosphoenolpyruvate. 7 residues coordinate 3-phosphoshikimate: serine 171, serine 172, glutamine 173, serine 199, aspartate 316, asparagine 339, and lysine 343. Residue glutamine 173 coordinates phosphoenolpyruvate. Aspartate 316 acts as the Proton acceptor in catalysis. Phosphoenolpyruvate contacts are provided by arginine 347, arginine 389, and lysine 414.

Belongs to the EPSP synthase family. In terms of assembly, monomer.

The protein localises to the cytoplasm. The enzyme catalyses 3-phosphoshikimate + phosphoenolpyruvate = 5-O-(1-carboxyvinyl)-3-phosphoshikimate + phosphate. The protein operates within metabolic intermediate biosynthesis; chorismate biosynthesis; chorismate from D-erythrose 4-phosphate and phosphoenolpyruvate: step 6/7. Its function is as follows. Catalyzes the transfer of the enolpyruvyl moiety of phosphoenolpyruvate (PEP) to the 5-hydroxyl of shikimate-3-phosphate (S3P) to produce enolpyruvyl shikimate-3-phosphate and inorganic phosphate. The polypeptide is 3-phosphoshikimate 1-carboxyvinyltransferase (Idiomarina loihiensis (strain ATCC BAA-735 / DSM 15497 / L2-TR)).